We begin with the raw amino-acid sequence, 202 residues long: MIAIIDYGMGNVGSIKNMIAKIGFDAIITNDPELISKATKLILPGVGSFDSGMTNLKELGLIDILNKKVVQEKTPLLGICLGMHLLTNSSEEGRLKGLGFINAKTVKFKLSNKFKIPHMGWNYVKFSIKNKLSDNLIENSRFYFVHSYYVICEDKKNILMTTEYENEFTSAVSKDNIYGVQFHPEKSHKFGMKLMENFIKQA.

The Glutamine amidotransferase type-1 domain maps to methionine 1–alanine 202. Cysteine 80 acts as the Nucleophile in catalysis. Catalysis depends on residues histidine 183 and glutamate 185.

In terms of assembly, heterodimer of HisH and HisF.

The protein resides in the cytoplasm. The enzyme catalyses 5-[(5-phospho-1-deoxy-D-ribulos-1-ylimino)methylamino]-1-(5-phospho-beta-D-ribosyl)imidazole-4-carboxamide + L-glutamine = D-erythro-1-(imidazol-4-yl)glycerol 3-phosphate + 5-amino-1-(5-phospho-beta-D-ribosyl)imidazole-4-carboxamide + L-glutamate + H(+). It carries out the reaction L-glutamine + H2O = L-glutamate + NH4(+). It participates in amino-acid biosynthesis; L-histidine biosynthesis; L-histidine from 5-phospho-alpha-D-ribose 1-diphosphate: step 5/9. IGPS catalyzes the conversion of PRFAR and glutamine to IGP, AICAR and glutamate. The HisH subunit provides the glutamine amidotransferase activity that produces the ammonia necessary to HisF for the synthesis of IGP and AICAR. The chain is Imidazole glycerol phosphate synthase subunit HisH 2 (hisH2) from Methanococcus maripaludis (strain DSM 14266 / JCM 13030 / NBRC 101832 / S2 / LL).